Here is a 201-residue protein sequence, read N- to C-terminus: MARRELLTPGLKVGLLGGSFNPAHEGHLHVTRMCLRALGLDRVWWLVSPQNPLKSDAGMASFDRRLASAEKMARDPRICVSDIEARLGTRYTVDTLAALTSRFPQIRFVWLMGADNLIQLPHWARWRDIVQTVPIAVYPRPGFTLKARLSPAATALRDVTLDATDAALLPLLTAPALAFLDGPESSQSATSIRERGGWSLR.

Residues 182-201 (GPESSQSATSIRERGGWSLR) form a disordered region. The span at 192-201 (IRERGGWSLR) shows a compositional bias: basic and acidic residues.

This sequence belongs to the NadD family.

It carries out the reaction nicotinate beta-D-ribonucleotide + ATP + H(+) = deamido-NAD(+) + diphosphate. Its pathway is cofactor biosynthesis; NAD(+) biosynthesis; deamido-NAD(+) from nicotinate D-ribonucleotide: step 1/1. Its function is as follows. Catalyzes the reversible adenylation of nicotinate mononucleotide (NaMN) to nicotinic acid adenine dinucleotide (NaAD). The chain is Probable nicotinate-nucleotide adenylyltransferase from Parvibaculum lavamentivorans (strain DS-1 / DSM 13023 / NCIMB 13966).